A 536-amino-acid polypeptide reads, in one-letter code: Phosphoenolpyruvate carboxykinase (ATP) (536 aa).

Substrate is bound by residues R61, Y195, and K201. Residues K201, H220, and 236 to 244 (GLSGTGKTT) contribute to the ATP site. Positions 201 and 220 each coordinate Mn(2+). D257 is a Mn(2+) binding site. The ATP site is built by E285, R323, and T448. R323 is a binding site for substrate.

The protein belongs to the phosphoenolpyruvate carboxykinase (ATP) family. Mn(2+) is required as a cofactor.

It is found in the cytoplasm. It catalyses the reaction oxaloacetate + ATP = phosphoenolpyruvate + ADP + CO2. It functions in the pathway carbohydrate biosynthesis; gluconeogenesis. Functionally, involved in the gluconeogenesis. Catalyzes the conversion of oxaloacetate (OAA) to phosphoenolpyruvate (PEP) through direct phosphoryl transfer between the nucleoside triphosphate and OAA. The polypeptide is Phosphoenolpyruvate carboxykinase (ATP) (Methylobacterium nodulans (strain LMG 21967 / CNCM I-2342 / ORS 2060)).